A 303-amino-acid chain; its full sequence is Coenzyme PQQ synthesis protein B (303 aa).

Belongs to the PqqB family.

The protein operates within cofactor biosynthesis; pyrroloquinoline quinone biosynthesis. Its function is as follows. May be involved in the transport of PQQ or its precursor to the periplasm. The sequence is that of Coenzyme PQQ synthesis protein B from Rhizobium meliloti (strain 1021) (Ensifer meliloti).